The following is a 184-amino-acid chain: Ribosome-recycling factor (184 aa).

This sequence belongs to the RRF family.

Its subcellular location is the cytoplasm. Functionally, responsible for the release of ribosomes from messenger RNA at the termination of protein biosynthesis. May increase the efficiency of translation by recycling ribosomes from one round of translation to another. This chain is Ribosome-recycling factor, found in Agathobacter rectalis (strain ATCC 33656 / DSM 3377 / JCM 17463 / KCTC 5835 / VPI 0990) (Eubacterium rectale).